A 304-amino-acid polypeptide reads, in one-letter code: MTESVFAVVVTHRRPDELAKSLDVLTAQTRLPDHLIVVDNDGCGDSPVRELVAGQPIATTYLGSRRNLGGAGGFALGMLHALAQGADWVWLADDDGHAQDARVLATLLACAEKYSLAEVSPMVCNIDDPTRLAFPLRRGLVWRRRASELRTEAGQELLPGIASLFNGALFRASTLAAIGVPDLRLFIRGDEVEMHRRLIRSGLPFGTCLDAAYLHPCGSDEFKPILCGRMHAQYPDDPGKRFFTYRNRGYVLSQPGLRKLLAQEWLRFGWFFLVTRRDPKGLWEWIRLRRLGRREKFGKPGGSA.

Belongs to the glycosyltransferase 2 family. In terms of assembly, is probably part of an AG biosynthetic complex.

It localises to the cell membrane. The protein localises to the secreted. Its subcellular location is the cell wall. The catalysed reaction is alpha-L-rhamnosyl-(1-&gt;3)-N-acetyl-alpha-D-glucosaminyl-diphospho-trans,octa-cis-decaprenol + 2 UDP-alpha-D-galactofuranose = beta-D-galactofuranosyl-(1-&gt;5)-beta-D-galactofuranosyl-(1-&gt;4)-alpha-L-rhamnosyl-(1-&gt;3)-N-acetyl-alpha-D-glucosaminyl-diphospho-trans,octa-cis-decaprenol + 2 UDP + 2 H(+). The protein operates within cell wall biogenesis; cell wall polysaccharide biosynthesis. Involved in the biosynthesis of the arabinogalactan (AG) region of the mycolylarabinogalactan-peptidoglycan (mAGP) complex, an essential component of the mycobacterial cell wall. Catalyzes the transfer of the first two galactofuranosyl (Galf) units from UDP-galactofuranose (UDP-Galf) onto the rhamnosyl-GlcNAc-diphospho-decaprenol (Rha-GlcNAc-PP-C50) acceptor, yielding galactofuranosyl-galactofuranosyl-rhamnosyl-GlcNAc-diphospho-decaprenol (Galf-Galf-Rha-GlcNAc-PP-C50). Thus, GlfT1 is the initiator of galactan synthesis, while GlfT2 continues with the subsequent polymerization events. The chain is Galactofuranosyltransferase GlfT1 from Mycobacterium tuberculosis (strain CDC 1551 / Oshkosh).